The chain runs to 101 residues: Small ribosomal subunit protein bS6 (101 aa).

This sequence belongs to the bacterial ribosomal protein bS6 family.

Binds together with bS18 to 16S ribosomal RNA. This Arthrobacter sp. (strain FB24) protein is Small ribosomal subunit protein bS6.